The following is a 346-amino-acid chain: Protease inhibitor Egf1.5b (346 aa).

A signal peptide spans 1-28 (MYIDTGIMSNNIFLFAFFALVGLTRIEA). Positions 52-104 (CRENEHYNSTRIECEDECNDRNNKLCYRFQQFCWCNEGYIRNSSHICVKLEDC) constitute a TIL domain.

The protein belongs to the polydnaviridae EGF-like motif protein family. Interacts with host PAP1, PAP3 and SPH2.

In terms of biological role, counteracts the host humoral immune response by inhibiting the processing and the amidolytic activity of host PAP1 and PAP3. Thereby, melanization of host hemolymph, normally producing several reactive intermediates toxic for viruses, is deregulated and proper immune response cannot occur. The protein is Protease inhibitor Egf1.5b (O5) of Microplitis demolitor (Parasitoid wasp).